Consider the following 198-residue polypeptide: Small ribosomal subunit protein uS2 (198 aa).

Belongs to the universal ribosomal protein uS2 family.

The protein is Small ribosomal subunit protein uS2 of Methanobrevibacter smithii (strain ATCC 35061 / DSM 861 / OCM 144 / PS).